The sequence spans 181 residues: Malignant T-cell-amplified sequence 1 (181 aa).

At Thr-81 the chain carries Phosphothreonine; by MAPK1 and MAPK3. The region spanning 92–171 (LPHQQVDKGA…IGIENIHYLN (80 aa)) is the PUA domain. Position 118 is a phosphoserine; by CDK1 (Ser-118).

Belongs to the MCTS1 family. As to quaternary structure, interacts (via PUA domain) with DENR; the complex regulates translation reinitiation. In terms of processing, phosphorylation is critical for stabilization and promotion of cell proliferation. As to expression, ubiquitous. Over-expressed in T-cell lymphoid cell lines and in non-Hodgkin lymphoma cell lines as well as in a subset of primary large B-cell lymphomas.

Its subcellular location is the cytoplasm. Functionally, translation regulator forming a complex with DENR to promote translation reinitiation. Translation reinitiation is the process where the small ribosomal subunit remains attached to the mRNA following termination of translation of a regulatory upstream ORF (uORF), and resume scanning on the same mRNA molecule to initiate translation of a downstream ORF, usually the main ORF (mORF). The MCTS1/DENR complex is pivotal to two linked mechanisms essential for translation reinitiation. Firstly, the dissociation of deacylated tRNAs from post-termination 40S ribosomal complexes during ribosome recycling. Secondly, the recruitment in an EIF2-independent manner of aminoacylated initiator tRNA to P site of 40S ribosomes for a new round of translation. This regulatory mechanism governs the translation of more than 150 genes which translation reinitiation is MCTS1/DENR complex-dependent. Consequently, modulates various unrelated biological processes including cell cycle regulation and DNA damage signaling and repair. Notably, it positively regulates interferon gamma immunity to mycobacteria by enhancing the translation of JAK2. This chain is Malignant T-cell-amplified sequence 1 (MCTS1), found in Homo sapiens (Human).